Here is a 432-residue protein sequence, read N- to C-terminus: MNTLSAISNNKQSKELQILNINFNQDQGCFAVGHEYGFLVYNTNPIDIRVKRNFNINGHGSGIAHITMLHRTNYLALVGGGKNPKFANNKLVIWDDLKRKNSLNLEFMSPVLNVLLSRIRIIVVLKNQVLVYGFSSPPKKFATYETIENEFGLADLSVNFTNSIGNNLSTSNSSISSLVSNQVSYDSNKYQTLAFPGRSIGQIQIVDVSPSGQEKNLVSIIKAHKSKIRCLALNRSGTLVASASETGTIIRVHSTHNTALLYEFRRGLDRAIVTSMKFSHDDSKLAVLSDKNTLHVYNVSPLNTSSGATSDLVTHNETYPVNRSHLLGSIAFPIPIPKYFKSTWSFCSVNTNKYHPSGSDNDTINDVGIIGWSGNDSIIIIWQNKKIWEKYVIVEKRNKYLGDINDGLNTSHQGSSNWELVRFNWKNLDNLD.

2 WD repeats span residues 223–263 (AHKS…LLYE) and 268–307 (LDRA…TSSG).

The protein belongs to the WD repeat PROPPIN family.

It is found in the vacuole membrane. The protein localises to the cytoplasmic vesicle membrane. Its function is as follows. Involved in mitochondrial or peroxisomal functions and amino acid signaling pathways. The protein is SVP1-like protein 2 (HSV2) of Debaryomyces hansenii (strain ATCC 36239 / CBS 767 / BCRC 21394 / JCM 1990 / NBRC 0083 / IGC 2968) (Yeast).